A 278-amino-acid polypeptide reads, in one-letter code: Non-structural protein 2a (278 aa).

It belongs to the coronaviruses ns2a protein family.

This chain is Non-structural protein 2a, found in Bovine coronavirus (strain Mebus) (BCoV).